Consider the following 1374-residue polypeptide: DNA-directed RNA polymerase subunit beta' (1374 aa).

Residues cysteine 71, cysteine 73, cysteine 86, and cysteine 89 each contribute to the Zn(2+) site. Mg(2+) is bound by residues aspartate 462, aspartate 464, and aspartate 466. Positions 810, 884, 891, and 894 each coordinate Zn(2+).

Belongs to the RNA polymerase beta' chain family. The RNAP catalytic core consists of 2 alpha, 1 beta, 1 beta' and 1 omega subunit. When a sigma factor is associated with the core the holoenzyme is formed, which can initiate transcription. The cofactor is Mg(2+). Zn(2+) serves as cofactor.

The catalysed reaction is RNA(n) + a ribonucleoside 5'-triphosphate = RNA(n+1) + diphosphate. Its function is as follows. DNA-dependent RNA polymerase catalyzes the transcription of DNA into RNA using the four ribonucleoside triphosphates as substrates. The sequence is that of DNA-directed RNA polymerase subunit beta' from Rickettsia massiliae (strain Mtu5).